The sequence spans 506 residues: Zinc finger and SCAN domain containing protein 4C (506 aa).

Residues 1 to 24 (MASQQAPAKDLQTNNLEFTPTDSS) are disordered. Positions 37–119 (SAQLNFSPSN…RFMESLTDEC (83 aa)) constitute an SCAN box domain. C2H2-type zinc fingers lie at residues 395–417 (YKCE…QRTH), 424–446 (LLCV…EIIH), 452–474 (FKCS…EMIH), and 480–503 (YVCS…RNYH).

In terms of tissue distribution, embryonic stem (ES) cell-specific. Expressed in only 5% of ES cells at a given time, but nearly all ES cells express it at least once during 9 passages.

The protein resides in the nucleus. The protein localises to the chromosome. It is found in the telomere. In terms of biological role, embryonic stem (ES) cell-specific transcription factor required to regulate ES cell pluripotency. Binds telomeres and plays a key role in genomic stability in ES cells by regulating telomere elongation. Acts as an activator of spontaneous telomere sister chromatid exchange (T-SCE) and telomere elongation in undifferentiated ES cells. The protein is Zinc finger and SCAN domain containing protein 4C (Zscan4c) of Mus musculus (Mouse).